A 283-amino-acid chain; its full sequence is Putative 4-diphosphocytidyl-2-C-methyl-D-erythritol kinase (283 aa).

The active site involves Lys-10. Residue Pro-94–Thr-104 participates in ATP binding. Asp-136 is a catalytic residue.

Belongs to the GHMP kinase family. IspE subfamily.

The catalysed reaction is 4-CDP-2-C-methyl-D-erythritol + ATP = 4-CDP-2-C-methyl-D-erythritol 2-phosphate + ADP + H(+). Catalyzes the phosphorylation of the position 2 hydroxy group of 4-diphosphocytidyl-2C-methyl-D-erythritol. The polypeptide is Putative 4-diphosphocytidyl-2-C-methyl-D-erythritol kinase (ispE) (Streptococcus agalactiae serotype Ia (strain ATCC 27591 / A909 / CDC SS700)).